The chain runs to 227 residues: Cytochrome c biogenesis ATP-binding export protein CcmA (227 aa).

Positions 26-227 (LAASGLGFSR…ARTLRLDARS (202 aa)) constitute an ABC transporter domain. ATP is bound at residue 58 to 65 (GANGSGKT).

This sequence belongs to the ABC transporter superfamily. CcmA exporter (TC 3.A.1.107) family. In terms of assembly, the complex is composed of two ATP-binding proteins (CcmA) and two transmembrane proteins (CcmB).

It localises to the cell inner membrane. It catalyses the reaction heme b(in) + ATP + H2O = heme b(out) + ADP + phosphate + H(+). Functionally, part of the ABC transporter complex CcmAB involved in the biogenesis of c-type cytochromes; once thought to export heme, this seems not to be the case, but its exact role is uncertain. Responsible for energy coupling to the transport system. The polypeptide is Cytochrome c biogenesis ATP-binding export protein CcmA (Cupriavidus necator (strain ATCC 17699 / DSM 428 / KCTC 22496 / NCIMB 10442 / H16 / Stanier 337) (Ralstonia eutropha)).